A 570-amino-acid polypeptide reads, in one-letter code: PTS system lactose-specific EIICB component (570 aa).

Residues 9 to 410 enclose the PTS EIIC type-3 domain; sequence IEKGKPFFEK…VVDIIIYYPF (402 aa). 9 helical membrane passes run 31–51, 65–85, 104–124, 133–153, 178–198, 223–243, 283–303, 340–360, and 382–402; these read GFISAMPVILFSSIFLLIAYV, AILMKPYNYTMGLVAFLVAGT, INFISTMLAAMCGFLFLASDP, AFMGTKGLLTAFLSAFVTVIV, FKDLIPFSAVIIILYALDLVI, GWIGVTIIFGAFALFWFVGIH, MFIVTFGGTGATLVVPFMFMW, VFFIPFVLAPIVNVWIFKLFV, and IIMGTGFGLWSFVLAITLIVV. The 104-residue stretch at 467 to 570 folds into the PTS EIIB type-3 domain; that stretch reads QTNVLVLCAG…LDFVQQQFEN (104 aa). C474 serves as the catalytic Phosphocysteine intermediate; for EIIB activity. C474 is modified (phosphocysteine; by EIIA).

It localises to the cell membrane. It catalyses the reaction lactose(out) + N(pros)-phospho-L-histidyl-[protein] = lactose 6-phosphate(in) + L-histidyl-[protein]. In terms of biological role, the phosphoenolpyruvate-dependent sugar phosphotransferase system (sugar PTS), a major carbohydrate active transport system, catalyzes the phosphorylation of incoming sugar substrates concomitantly with their translocation across the cell membrane. The enzyme II LacEF PTS system is involved in lactose transport. In Staphylococcus aureus (strain N315), this protein is PTS system lactose-specific EIICB component.